Reading from the N-terminus, the 253-residue chain is Phosphate import ATP-binding protein PstB (253 aa).

The ABC transporter domain maps to 5–248 (IETINLHVYY…PEHELTEKYV (244 aa)). Residue 37–44 (GPSGCGKS) coordinates ATP.

The protein belongs to the ABC transporter superfamily. Phosphate importer (TC 3.A.1.7) family. The complex is composed of two ATP-binding proteins (PstB), two transmembrane proteins (PstC and PstA) and a solute-binding protein (PstS).

It localises to the cell membrane. It catalyses the reaction phosphate(out) + ATP + H2O = ADP + 2 phosphate(in) + H(+). In terms of biological role, part of the ABC transporter complex PstSACB involved in phosphate import. Responsible for energy coupling to the transport system. The protein is Phosphate import ATP-binding protein PstB of Pyrococcus furiosus (strain ATCC 43587 / DSM 3638 / JCM 8422 / Vc1).